The sequence spans 630 residues: Cyclin-T1-2 (630 aa).

The span at 288 to 297 (QSSLSVSSSS) shows a compositional bias: low complexity. Disordered stretches follow at residues 288–313 (QSSL…DSSQ) and 410–439 (RSGD…VEPP). Positions 421–439 (GGSSLTDVDSKSTQSVEPP) are enriched in polar residues.

This sequence belongs to the cyclin family. Cyclin T subfamily.

The polypeptide is Cyclin-T1-2 (CYCT1_2) (Oryza sativa subsp. japonica (Rice)).